Reading from the N-terminus, the 286-residue chain is Bifunctional protein FolD (286 aa).

NADP(+)-binding positions include 165-167 (GRS) and S190.

It belongs to the tetrahydrofolate dehydrogenase/cyclohydrolase family. As to quaternary structure, homodimer.

The enzyme catalyses (6R)-5,10-methylene-5,6,7,8-tetrahydrofolate + NADP(+) = (6R)-5,10-methenyltetrahydrofolate + NADPH. It carries out the reaction (6R)-5,10-methenyltetrahydrofolate + H2O = (6R)-10-formyltetrahydrofolate + H(+). The protein operates within one-carbon metabolism; tetrahydrofolate interconversion. Catalyzes the oxidation of 5,10-methylenetetrahydrofolate to 5,10-methenyltetrahydrofolate and then the hydrolysis of 5,10-methenyltetrahydrofolate to 10-formyltetrahydrofolate. This chain is Bifunctional protein FolD, found in Staphylococcus aureus (strain MRSA252).